A 213-amino-acid chain; its full sequence is Probable nicotinate-nucleotide adenylyltransferase (213 aa).

This sequence belongs to the NadD family.

The catalysed reaction is nicotinate beta-D-ribonucleotide + ATP + H(+) = deamido-NAD(+) + diphosphate. It functions in the pathway cofactor biosynthesis; NAD(+) biosynthesis; deamido-NAD(+) from nicotinate D-ribonucleotide: step 1/1. Functionally, catalyzes the reversible adenylation of nicotinate mononucleotide (NaMN) to nicotinic acid adenine dinucleotide (NaAD). This is Probable nicotinate-nucleotide adenylyltransferase from Escherichia coli O139:H28 (strain E24377A / ETEC).